The chain runs to 115 residues: ESX-1 secretion-associated protein EspL (115 aa).

The polypeptide is ESX-1 secretion-associated protein EspL (Mycobacterium tuberculosis (strain CDC 1551 / Oshkosh)).